The sequence spans 719 residues: MSDISVEKLTELEAAAELERLARAIAHHDELYHAKDRPEISDAAYDALKRRNEAIEAHFPALVRDDSPSRRVGAAPALAIFAPVVHARPMLSLDNAFSDEDVRDFVGSVYRFLGQLPDDSIAFTAEPKIDGLSMSIRYENGILVSGATRGDGTTGENVTANIRTIAEIPNRLPAGAPAVVEVRGEVYMAKSDFLTLNAQMEAEGKQTYVNPRNTAAGSLRQLDAKVTASRKLRFFAYAWGEMSDMPADTQLGMVEVFRQWGFPVNPLMKRFNSVDGLLAHYRAIGMERPTLDYDIDGVVYKVDRLDLQTRLGFRSRSPRWAIAHKFPAEQALTILRGIDIQVGRTGALTPVARLEPITVGGVVVTNATLHNEDYIKGIGQKGEPIREGRDIRIGDSVIVQRAGDVIPQIVDVVLEEGKKRGEPYQFPHVCPACGSHAVREEGEAVRRCTGGLICPAQAVERIRHFVSRNAFDIEGLGEKQVEFFFNAEDPALCIRSPADIFTLKKRQENSLTKLQNIEGFGATSVKKLYDAIDARREIALHRFLFGLGIRHVGEVNAKRLARAYLSYAAFKKAALEAVPPKEGDRTDKGSEAWQDMLAVEGIGSIVAEAVVDFYGEPHNREVLAALLAEVTPLDEEARVATGSPVEGKTVVFTGSLERMSRDEAKAMAERHGAKTAGSVSKKTDLVVAGPGAGSKLAKATELGIEVINEDDWFKLVGED.

Residues 42–46, 92–93, and Glu-126 each bind NAD(+); these read DAAYD and SL. Lys-128 serves as the catalytic N6-AMP-lysine intermediate. 4 residues coordinate NAD(+): Arg-149, Glu-185, Lys-301, and Lys-325. The Zn(2+) site is built by Cys-430, Cys-433, Cys-448, and Cys-454. Positions 640 to 719 constitute a BRCT domain; that stretch reads ATGSPVEGKT…DDWFKLVGED (80 aa).

This sequence belongs to the NAD-dependent DNA ligase family. LigA subfamily. It depends on Mg(2+) as a cofactor. Mn(2+) serves as cofactor.

It catalyses the reaction NAD(+) + (deoxyribonucleotide)n-3'-hydroxyl + 5'-phospho-(deoxyribonucleotide)m = (deoxyribonucleotide)n+m + AMP + beta-nicotinamide D-nucleotide.. DNA ligase that catalyzes the formation of phosphodiester linkages between 5'-phosphoryl and 3'-hydroxyl groups in double-stranded DNA using NAD as a coenzyme and as the energy source for the reaction. It is essential for DNA replication and repair of damaged DNA. The polypeptide is DNA ligase (Brucella melitensis biotype 1 (strain ATCC 23456 / CCUG 17765 / NCTC 10094 / 16M)).